A 689-amino-acid polypeptide reads, in one-letter code: Methionine--tRNA ligase (689 aa).

The 'HIGH' region signature appears at 19-29 (PYPTGDLHIGH). Zn(2+) is bound by residues C150, C153, C162, and C166. Positions 338-342 (GLSTS) match the 'KMSKS' region motif. T341 is a binding site for ATP. The region spanning 591–689 (EFQALDLRVG…EDSEPGTKVM (99 aa)) is the tRNA-binding domain.

Belongs to the class-I aminoacyl-tRNA synthetase family. MetG type 1 subfamily. Homodimer. Requires Zn(2+) as cofactor.

The protein resides in the cytoplasm. The enzyme catalyses tRNA(Met) + L-methionine + ATP = L-methionyl-tRNA(Met) + AMP + diphosphate. Functionally, is required not only for elongation of protein synthesis but also for the initiation of all mRNA translation through initiator tRNA(fMet) aminoacylation. The polypeptide is Methionine--tRNA ligase (Halobacterium salinarum (strain ATCC 700922 / JCM 11081 / NRC-1) (Halobacterium halobium)).